The chain runs to 160 residues: Transcription antitermination protein NusB (160 aa).

This sequence belongs to the NusB family.

Its function is as follows. Involved in transcription antitermination. Required for transcription of ribosomal RNA (rRNA) genes. Binds specifically to the boxA antiterminator sequence of the ribosomal RNA (rrn) operons. This is Transcription antitermination protein NusB from Mycolicibacterium smegmatis (strain ATCC 700084 / mc(2)155) (Mycobacterium smegmatis).